We begin with the raw amino-acid sequence, 438 residues long: Cyclic 2,3-diphosphoglycerate synthetase (438 aa).

It belongs to the cyclic 2,3-diphosphoglycerate synthetase family.

Its subcellular location is the cytoplasm. It catalyses the reaction (2R)-2,3-bisphosphoglycerate + ATP + H(+) = cyclic (2R)-2,3-bisphosphoglycerate + ADP + phosphate. Functionally, catalyzes the formation of cyclic 2,3-diphosphoglycerate (cDPG) by formation of an intramolecular phosphoanhydride bond at the expense of ATP. This chain is Cyclic 2,3-diphosphoglycerate synthetase, found in Thermococcus gammatolerans (strain DSM 15229 / JCM 11827 / EJ3).